Consider the following 558-residue polypeptide: DALR anticodon-binding domain-containing protein 3 (558 aa).

The segment at Lys213 to Glu240 is disordered.

The protein is DALR anticodon-binding domain-containing protein 3 (dalrd3) of Danio rerio (Zebrafish).